Here is a 446-residue protein sequence, read N- to C-terminus: MALIIQKFGGTSVANVERIKKLVPIIKAEIAKNNQVIVVVSAMAGVTNQLVTLCNEVSSLNKRSQFAEYDVALSSGEIVTASLLALALQEEEIKAQSLLAWQLPIRTNNNYSKALVEFITTDLLEKYLQLKIIPIIAGFQGINKSNRVTTLGRGGSDTTAALIAAAMKADRCDIYTDVDGIFTADPRIIPNAKRIKEIDFLEMLELASSGAKVLHPRAVELVMRYKIDMRVLSTFSPNTEGTLITSKDTIPLVKSTYMEESALNTKHSTKIDIPEDASGSTYKLPIELALQNRYNMENCVVRCITSNKNLLKVSVNSISLSFLQVANMITYNNNCIEFMQEIENNIEYNFITNLTDKNNLQTLLTKCKNNKQIQDFTFDTEIATISLIGYGIKNDCKLLTMILSQLTQDNINVHMMQLSEVKITLLINDKDVEKTIFNLYNLFKIS.

Residues 250 to 294 (IPLVKSTYMEESALNTKHSTKIDIPEDASGSTYKLPIELALQNRY) form the RPE1 insert domain.

Belongs to the aspartokinase family.

The catalysed reaction is L-aspartate + ATP = 4-phospho-L-aspartate + ADP. The protein operates within amino-acid biosynthesis; L-lysine biosynthesis via DAP pathway; (S)-tetrahydrodipicolinate from L-aspartate: step 1/4. Its pathway is amino-acid biosynthesis; L-methionine biosynthesis via de novo pathway; L-homoserine from L-aspartate: step 1/3. It functions in the pathway amino-acid biosynthesis; L-threonine biosynthesis; L-threonine from L-aspartate: step 1/5. This is Aspartokinase (lysC) from Rickettsia prowazekii (strain Madrid E).